A 446-amino-acid chain; its full sequence is D(1A) dopamine receptor (446 aa).

Topologically, residues 1–22 are extracellular; that stretch reads MAPNTSTMDETGLPVERDFSFR. Asn4 is a glycosylation site (N-linked (GlcNAc...) asparagine). A helical transmembrane segment spans residues 23-48; it reads ILTACFLSLLILSTLLGNTLVCAAVI. The Cytoplasmic portion of the chain corresponds to 49 to 59; it reads RFRHLRSKVTN. Residues 60-86 form a helical membrane-spanning segment; that stretch reads FFVISLAVSDLLVAVLVMPWKAVAEIA. At 87-95 the chain is on the extracellular side; it reads GFWPFGSFC. Cysteines 95 and 186 form a disulfide. The helical transmembrane segment at 96-118 threads the bilayer; sequence NIWVAFDIMCSTASILNLCVISV. The Cytoplasmic segment spans residues 119 to 137; the sequence is DRYWAISSPFQYERKMTPK. Residues 138-162 form a helical membrane-spanning segment; that stretch reads AAFILISVAWTLSVLISFIPVQLSW. Residues 163 to 192 are Extracellular-facing; it reads HKAKPTWPLDGNFTSLEDAEDDNCDTRLSR. A helical transmembrane segment spans residues 193 to 218; sequence TYAISSSLISFYIPVAIMIVTYTSIY. The Cytoplasmic portion of the chain corresponds to 219-272; it reads RIAQKQIRRISALERAAVHAKNCQTTTGNGNPVECSQSESSFKMSFKRETKVLK. The chain crosses the membrane as a helical span at residues 273-299; that stretch reads TLSVIMGVFVCCWLPFFISNCMVPFCG. Residues 300–312 are Extracellular-facing; it reads SEETQPFCIDSIT. Residues 313 to 337 form a helical membrane-spanning segment; sequence FDVFVWFGWANSSLNPIIYAFNADF. Residues 338–446 are Cytoplasmic-facing; it reads QKAFSTLLGC…PVTHSGQHST (109 aa). Residues Cys347 and Cys351 are each lipidated (S-palmitoyl cysteine). At Ser441 the chain carries Phosphoserine.

It belongs to the G-protein coupled receptor 1 family. In terms of assembly, interacts with DNAJC14 via its C-terminus. Interacts with DRD2. Interacts with DORIP1.

It localises to the cell membrane. Its subcellular location is the endoplasmic reticulum membrane. The protein resides in the cell projection. It is found in the cilium membrane. The protein localises to the dendrite. It localises to the dendritic spine. Dopamine receptor whose activity is mediated by G proteins which activate adenylyl cyclase. In Mus musculus (Mouse), this protein is D(1A) dopamine receptor (Drd1).